The chain runs to 266 residues: MEYLKFVLYGLIQGLTEFIPVSSTAHLKVISLFLGIDDPGASLSATIQLGSVIAIAYYFRNDIFNFRSQSSKKFLEYLFHERLLRSIFIGTIPIVLLGGSIKIFIPSFFENVLRSNLSIALVSFLMAFFMYLADSSKRGSINIKNHNFSNSFLIGIFQAFAIFPGVSRSGVTISSALISGWERGDAAKFSFLLGMPAISLAAIVEFVSSFNDFFSLGFFPLFVGLITTFLSSLLAIDFLLKYFSSNGLKIFIIYRVIFGVVILLNL.

The next 7 helical transmembrane spans lie at 39 to 59 (PGAS…AYYF), 86 to 106 (SIFI…IFIP), 112 to 132 (VLRS…FMYL), 147 to 167 (NFSN…PGVS), 189 to 209 (FSFL…FVSS), 216 to 236 (LGFF…LLAI), and 246 to 266 (NGLK…LLNL).

It belongs to the UppP family.

The protein localises to the cell inner membrane. It carries out the reaction di-trans,octa-cis-undecaprenyl diphosphate + H2O = di-trans,octa-cis-undecaprenyl phosphate + phosphate + H(+). Functionally, catalyzes the dephosphorylation of undecaprenyl diphosphate (UPP). Confers resistance to bacitracin. The chain is Undecaprenyl-diphosphatase from Prochlorococcus marinus (strain MIT 9301).